A 150-amino-acid chain; its full sequence is Transcription antitermination protein NusB (150 aa).

This sequence belongs to the NusB family.

Involved in transcription antitermination. Required for transcription of ribosomal RNA (rRNA) genes. Binds specifically to the boxA antiterminator sequence of the ribosomal RNA (rrn) operons. This chain is Transcription antitermination protein NusB, found in Streptococcus equi subsp. zooepidemicus (strain H70).